A 242-amino-acid polypeptide reads, in one-letter code: MAPK-interacting and spindle-stabilizing protein-like (242 aa).

Disordered stretches follow at residues 1-145 (MSDE…SLGP) and 192-242 (PPGA…HSYH). Ser-2 bears the N-acetylserine mark. A phosphoserine mark is found at Ser-2, Ser-6, and Ser-15. Over residues 13–29 (EQSSAKPPAVTNTKAGH) the composition is skewed to polar residues. Over residues 30-43 (SSQGWPGSSPWSNP) the composition is skewed to low complexity. Pro residues-rich tracts occupy residues 44–53 (SAPPAMPSGL) and 75–114 (SMPP…PGPT). Residues 192-210 (PPGAWGPAAPYPGPAGSYP) show a composition bias toward low complexity.

It belongs to the MISS family.

In Mus musculus (Mouse), this protein is MAPK-interacting and spindle-stabilizing protein-like (Mapk1ip1l).